The following is a 252-amino-acid chain: Vacuolar-sorting protein dot2 (252 aa).

The protein belongs to the SNF8 family. As to quaternary structure, component of the endosomal sorting complex required for transport II (ESCRT-II).

It localises to the cytoplasm. The protein resides in the nucleus. The protein localises to the endosome membrane. Component of the endosomal sorting complex required for transport II (ESCRT-II), which is required for multivesicular body (MVB) formation and sorting of endosomal cargo proteins into MVBs. The MVB pathway mediates delivery of transmembrane proteins into the lumen of the lysosome for degradation. The ESCRT-II complex is probably involved in the recruitment of the ESCRT-III complex. Negatively regulates meiotic spindle pole body maturation via indirect regulation of the pcp1 gene. Required for efficient entry into pre-meiotic S phase. The protein is Vacuolar-sorting protein dot2 (dot2) of Schizosaccharomyces pombe (strain 972 / ATCC 24843) (Fission yeast).